The sequence spans 196 residues: Probable phosphoheptose isomerase (196 aa).

The 154-residue stretch at 43-196 (IVNVFNSGGK…MICSVIDSYY (154 aa)) folds into the SIS domain. A substrate-binding site is contributed by 58 to 60 (NGG). Residues His-67 and Glu-71 each coordinate Zn(2+). Residues Glu-71, 100–101 (ND), 126–128 (STS), Ser-131, and Gln-178 each bind substrate. Zn(2+) is bound by residues Gln-178 and His-186.

This sequence belongs to the SIS family. GmhA subfamily. Requires Zn(2+) as cofactor.

It is found in the cytoplasm. The catalysed reaction is 2 D-sedoheptulose 7-phosphate = D-glycero-alpha-D-manno-heptose 7-phosphate + D-glycero-beta-D-manno-heptose 7-phosphate. The protein operates within carbohydrate biosynthesis; D-glycero-D-manno-heptose 7-phosphate biosynthesis; D-glycero-alpha-D-manno-heptose 7-phosphate and D-glycero-beta-D-manno-heptose 7-phosphate from sedoheptulose 7-phosphate: step 1/1. Functionally, catalyzes the isomerization of sedoheptulose 7-phosphate in D-glycero-D-manno-heptose 7-phosphate. This is Probable phosphoheptose isomerase from Thermoplasma volcanium (strain ATCC 51530 / DSM 4299 / JCM 9571 / NBRC 15438 / GSS1).